Reading from the N-terminus, the 1224-residue chain is uncharacterized protein (1224 aa).

Disordered regions lie at residues 1–67 (MNQD…SSSI), 111–151 (QQSH…PPPL), 193–270 (QTEL…DPNI), 316–416 (DYNN…TVKK), 430–957 (SDSG…QEEK), and 1078–1167 (SFLP…TSHV). The segment covering 10-48 (SFHSNNNSNSNHHHSYNNSINSGSSSSGSNNSSNNNSFN) has biased composition (low complexity). Residues 49–58 (DEIEGGEIQE) show a composition bias toward acidic residues. 3 stretches are compositionally biased toward low complexity: residues 126–140 (SSSSSSSSSSSSSSS), 193–212 (QTELQNKSTPSKTSSASSPP), and 228–241 (SAPTSAPTSSSVSS). Residues 242 to 255 (LTQPQKPKSVQYSQ) show a composition bias toward polar residues. A compositionally biased stretch (basic and acidic residues) spans 260 to 270 (EIREEKVDPNI). A compositionally biased stretch (low complexity) spans 316–338 (DYNNSNSNNSNNNNNNNNSITEN). Positions 341-353 (DKMINNQPSSTNS) are enriched in polar residues. Composition is skewed to low complexity over residues 379–413 (TTTTTTTTTTSSTSEPIKSPNSSSSTNSSASTTPT) and 430–450 (SDSGTNKESNSSNSSSTTSTP). Basic and acidic residues-rich tracts occupy residues 451–585 (KSKD…DKKK) and 630–646 (EIDKSDKRSQKKSKVES). The segment covering 662 to 719 (TTTTTTSTSSSSSLPSLSSSSSSLPLPSSSSSSSSSSSSSSSSSSSSSSSSSSSTTST) has biased composition (low complexity). Over residues 727-750 (PPPPPQQPPPPPPQQPPPPPPPIN) the composition is skewed to pro residues. Residues 755 to 892 (SEHDKKIIEK…SDRDRDRKDS (138 aa)) show a composition bias toward basic and acidic residues. Positions 893–933 (NSNNNSNNNNNNNNNNNNNNNNNNNNKKDNNNNNNNNNNNN) are enriched in low complexity. Basic and acidic residues predominate over residues 948–957 (TPKKTKQEEK). Positions 950–991 (KKTKQEEKLIRSQIDQIKEDAKDLKKLAKELQSKNQNECLEM) form a coiled coil. Composition is skewed to low complexity over residues 1078–1108 (SFLPNSSSSSKSSSSSSSSSNQPANPATAPL) and 1114–1165 (NPSE…PNTS).

This is an uncharacterized protein from Dictyostelium discoideum (Social amoeba).